Here is a 410-residue protein sequence, read N- to C-terminus: Mannosyl phosphorylinositol ceramide synthase regulatory protein CSG2 (410 aa).

An N-terminal signal peptide occupies residues 1-17; sequence MSTTLLWFSSVIGYVIQ. At 18–50 the chain is on the lumenal side; sequence TKCLSNIQSKKEISVGPNGTIATPETNGDNGNS. N35 and N49 each carry an N-linked (GlcNAc...) asparagine glycan. The chain crosses the membrane as a helical span at residues 51-71; the sequence is SSLTFYLTFMYFASWLLLVPA. The Cytoplasmic segment spans residues 72–141; the sequence is SRLWEKMRPM…SVATFKYVAK (70 aa). A helical transmembrane segment spans residues 142-161; it reads LTVLALIMIVADLTYNMALS. Residues 162-167 lie on the Lumenal side of the membrane; that stretch reads LSPAFD. A helical transmembrane segment spans residues 168 to 187; it reads VALMQNTAIFEIVTLLYGVC. Over 188 to 197 the chain is Cytoplasmic; it reads GISRKNYVFR. The chain crosses the membrane as a helical span at residues 198–217; the sequence is NFLIMMNAVIGILIISYTKA. Residues 218–245 are Lumenal-facing; that stretch reads TCDMLAGKLSVNPNTGELSDPFLFDRLK. A helical membrane pass occupies residues 246-265; the sequence is GALICGLGALIMGPFAVLWN. The Cytoplasmic portion of the chain corresponds to 266 to 285; it reads RWFCSNISKNENSAVVLVKQ. Residues 286–305 traverse the membrane as a helical segment; that stretch reads STHMALIGIIGMVILLPFIP. The Lumenal segment spans residues 306–324; it reads KFPSRESVESISLFYNDKS. The chain crosses the membrane as a helical span at residues 325-344; it reads FWFSLLGSIIFGSLPSLISI. Topologically, residues 345–355 are cytoplasmic; sequence LELNRKAPAEY. The helical transmembrane segment at 356-374 threads the bilayer; it reads LTTCNLGAIIFMGLAEWVC. Topologically, residues 375–385 are lumenal; the sequence is EPTQTTIVRWE. A helical membrane pass occupies residues 386 to 404; it reads VIGYIMLTVSLLVLSVTLG. The Cytoplasmic portion of the chain corresponds to 405-410; it reads EGKYHH.

As to quaternary structure, heterodimer of CSH1 and CSG2, and SUR1 and CSG2.

The protein resides in the endoplasmic reticulum membrane. Functionally, required for calcium regulation. May regulate calcium accumulation by a non-vacuole organelle. Also regulates the activity of CSH1 and SUR1 during mannosyl phosphorylinositol ceramide synthesis. The protein is Mannosyl phosphorylinositol ceramide synthase regulatory protein CSG2 (CSG2) of Saccharomyces cerevisiae (strain ATCC 204508 / S288c) (Baker's yeast).